Reading from the N-terminus, the 479-residue chain is Carbohydrate sulfotransferase 3 (479 aa).

Topologically, residues 1 to 20 (MEKGLTLPQDCRDFVHSLKM) are cytoplasmic. A helical; Signal-anchor for type II membrane protein transmembrane segment spans residues 21–38 (RSKYALFLVFVVIVFVFI). Topologically, residues 39–479 (EKENKIISRV…LEERGTFWVT (441 aa)) are lumenal. 3 N-linked (GlcNAc...) asparagine glycosylation sites follow: Asn-63, Asn-74, and Asn-96. Residues 108-128 (EAAGEEEEEQRKEEEPPRPAV) form a disordered region. 141-147 (TRTGSSF) lines the 3'-phosphoadenylyl sulfate pocket. N-linked (GlcNAc...) asparagine glycosylation occurs at Asn-256. Residue 301–309 (RDPRAVLAS) participates in 3'-phosphoadenylyl sulfate binding. 2 N-linked (GlcNAc...) asparagine glycosylation sites follow: Asn-420 and Asn-464.

This sequence belongs to the sulfotransferase 1 family. Gal/GlcNAc/GalNAc subfamily. N-glycosylated. As to expression, widely expressed in adult tissues. Expressed in heart, placenta, skeletal muscle and pancreas. Also expressed in various immune tissues such as spleen, lymph node, thymus and appendix.

The protein resides in the golgi apparatus membrane. The catalysed reaction is chondroitin beta-D-glucuronate + n 3'-phosphoadenylyl sulfate = chondroitin 6'-sulfate + n adenosine 3',5'-bisphosphate + n H(+). The enzyme catalyses 3'-phosphoadenylyl sulfate + keratan = adenosine 3',5'-bisphosphate + keratan 6'-sulfate.. Sulfotransferase that utilizes 3'-phospho-5'-adenylyl sulfate (PAPS) as sulfonate donor to catalyze the transfer of sulfate to position 6 of the N-acetylgalactosamine (GalNAc) residue of chondroitin. Chondroitin sulfate constitutes the predominant proteoglycan present in cartilage and is distributed on the surfaces of many cells and extracellular matrices. Catalyzes with a lower efficiency the sulfation of Gal residues of keratan sulfate, another glycosaminoglycan. Can also catalyze the sulfation of the Gal residues in sialyl N-acetyllactosamine (sialyl LacNAc) oligosaccharides. May play a role in the maintenance of naive T-lymphocytes in the spleen. The chain is Carbohydrate sulfotransferase 3 (CHST3) from Homo sapiens (Human).